We begin with the raw amino-acid sequence, 227 residues long: Guanylate kinase (227 aa).

The Guanylate kinase-like domain occupies Gly-21–Ala-199. Ala-28–Ser-35 contacts ATP.

Belongs to the guanylate kinase family.

The protein resides in the cytoplasm. It catalyses the reaction GMP + ATP = GDP + ADP. In terms of biological role, essential for recycling GMP and indirectly, cGMP. This is Guanylate kinase from Burkholderia mallei (strain ATCC 23344).